The following is a 528-amino-acid chain: MDHCGALFLCLCLLTLQNATTETWEELLSYMENMQVSRGRSSVFSSRQLHQLEQMLLNTSFPGYNLTLQTPTIQSLAFKLSCDFSGLSLTSATLKRVPQAGGQHARGQHAMQFPAELTRDACKTRPRELRLICIYFSNTHFFKDENNSSLLNNYVLGAQLSHGHVNNLRDPVNISFWHNQSLEGYTLTCVFWKEGARKQPWGGWSPEGCRTEQPSHSQVLCRCNHLTYFAVLMQLSPALVPAELLAPLTYISLVGCSISIVASLITVLLHFHFRKQSDSLTRIHMNLHASVLLLNIAFLLSPAFAMSPVPGSACTALAAALHYALLSCLTWMAIEGFNLYLLLGRVYNIYIRRYVFKLGVLGWGAPALLVLLSLSVKSSVYGPCTIPVFDSWENGTGFQNMSICWVRSPVVHSVLVMGYGGLTSLFNLVVLAWALWTLRRLRERADAPSVRACHDTVTVLGLTVLLGTTWALAFFSFGVFLLPQLFLFTILNSLYGFFLFLWFCSQRCRSEAEAKAQIEAFSSSQTTQ.

An N-terminal signal peptide occupies residues 1–21; sequence MDHCGALFLCLCLLTLQNATT. The Extracellular segment spans residues 22–245; the sequence is ETWEELLSYM…SPALVPAELL (224 aa). N-linked (GlcNAc...) asparagine glycans are attached at residues N58, N65, N146, N147, N173, and N179. The 162-residue stretch at 78–239 folds into the GAIN-B domain; that stretch reads FKLSCDFSGL…AVLMQLSPAL (162 aa). 2 disulfides stabilise this stretch: C189–C221 and C209–C223. Residues 189–239 are GPS; it reads CVFWKEGARKQPWGGWSPEGCRTEQPSHSQVLCRCNHLTYFAVLMQLSPAL. Residues 228 to 236 form a stachel region; it reads YFAVLMQLS. A helical transmembrane segment spans residues 246-271; sequence APLTYISLVGCSISIVASLITVLLHF. Over 272–280 the chain is Cytoplasmic; the sequence is HFRKQSDSL. Residues 281–304 traverse the membrane as a helical segment; that stretch reads TRIHMNLHASVLLLNIAFLLSPAF. The Extracellular segment spans residues 305–314; sequence AMSPVPGSAC. A disulfide bond links C314 and C404. Residues 315 to 340 form a helical membrane-spanning segment; it reads TALAAALHYALLSCLTWMAIEGFNLY. Over 341–353 the chain is Cytoplasmic; sequence LLLGRVYNIYIRR. The helical transmembrane segment at 354 to 377 threads the bilayer; it reads YVFKLGVLGWGAPALLVLLSLSVK. Over 378–410 the chain is Extracellular; the sequence is SSVYGPCTIPVFDSWENGTGFQNMSICWVRSPV. N-linked (GlcNAc...) asparagine glycans are attached at residues N394 and N400. The chain crosses the membrane as a helical span at residues 411–435; the sequence is VHSVLVMGYGGLTSLFNLVVLAWAL. Residues 436 to 455 lie on the Cytoplasmic side of the membrane; the sequence is WTLRRLRERADAPSVRACHD. A helical transmembrane segment spans residues 456–477; sequence TVTVLGLTVLLGTTWALAFFSF. The Extracellular portion of the chain corresponds to 478–481; that stretch reads GVFL. The helical transmembrane segment at 482 to 505 threads the bilayer; that stretch reads LPQLFLFTILNSLYGFFLFLWFCS. The Cytoplasmic portion of the chain corresponds to 506–528; sequence QRCRSEAEAKAQIEAFSSSQTTQ.

The protein belongs to the G-protein coupled receptor 2 family. Adhesion G-protein coupled receptor (ADGR) subfamily. Heterodimer of 2 chains generated by proteolytic processing; the large extracellular N-terminal fragment and the membrane-bound C-terminal fragment predominantly remain associated and non-covalently linked. In terms of processing, autoproteolytically processed at the GPS region of the GAIN-B domain; this cleavage modulates receptor activity. Post-translationally, N-glycsylated. As to expression, expressed in immune cells. Primarily found in granulocytes. Found in eosinophils.

It is found in the cell membrane. With respect to regulation, forms a heterodimer of 2 chains generated by proteolytic processing that remain associated through non-covalent interactions mediated by the GAIN-B domain. In the inactivated receptor, the Stachel sequence (also named stalk) is embedded in the GAIN-B domain, where it adopts a beta-strand conformation. On activation, the Stachel moves into the 7 transmembrane region and adopts a twisted hook-shaped configuration that forms contacts within the receptor, leading to coupling of a G-alpha protein, which activates signaling. The cleaved GAIN-B and N-terminal domains can then dissociate from the rest of the receptor. Its function is as follows. Orphan adhesion G-protein coupled receptor (aGPCR). Ligand binding causes a conformation change that triggers signaling via guanine nucleotide-binding proteins (G proteins) and modulates the activity of downstream effectors, such as adenylate cyclase. ADGRG5 is specifically coupled to G(s) G proteins and mediates activation of adenylate cyclase activity. The chain is Adhesion G-protein coupled receptor G5 from Homo sapiens (Human).